Here is a 409-residue protein sequence, read N- to C-terminus: Dihydrolipoyllysine-residue succinyltransferase component of 2-oxoglutarate dehydrogenase complex (409 aa).

Residues Ala-2–Asn-77 enclose the Lipoyl-binding domain. Lys-43 is modified (N6-lipoyllysine). The region spanning Ile-112–Val-149 is the Peripheral subunit-binding (PSBD) domain. Active-site residues include His-380 and Asp-384.

It belongs to the 2-oxoacid dehydrogenase family. In terms of assembly, forms a 24-polypeptide structural core with octahedral symmetry. Part of the 2-oxoglutarate dehydrogenase (OGDH) complex composed of E1 (2-oxoglutarate dehydrogenase), E2 (dihydrolipoamide succinyltransferase) and E3 (dihydrolipoamide dehydrogenase); the complex contains multiple copies of the three enzymatic components (E1, E2 and E3). It depends on (R)-lipoate as a cofactor.

It carries out the reaction N(6)-[(R)-dihydrolipoyl]-L-lysyl-[protein] + succinyl-CoA = N(6)-[(R)-S(8)-succinyldihydrolipoyl]-L-lysyl-[protein] + CoA. It functions in the pathway amino-acid degradation; L-lysine degradation via saccharopine pathway; glutaryl-CoA from L-lysine: step 6/6. E2 component of the 2-oxoglutarate dehydrogenase (OGDH) complex which catalyzes the second step in the conversion of 2-oxoglutarate to succinyl-CoA and CO(2). The polypeptide is Dihydrolipoyllysine-residue succinyltransferase component of 2-oxoglutarate dehydrogenase complex (sucB) (Pseudomonas aeruginosa (strain ATCC 15692 / DSM 22644 / CIP 104116 / JCM 14847 / LMG 12228 / 1C / PRS 101 / PAO1)).